A 186-amino-acid chain; its full sequence is FMN reductase (NADPH) (186 aa).

This sequence belongs to the SsuE family.

The enzyme catalyses FMNH2 + NADP(+) = FMN + NADPH + 2 H(+). The chain is FMN reductase (NADPH) (msuE) from Pseudomonas aeruginosa (strain ATCC 15692 / DSM 22644 / CIP 104116 / JCM 14847 / LMG 12228 / 1C / PRS 101 / PAO1).